The following is a 143-amino-acid chain: Transcriptional regulator MraZ (143 aa).

SpoVT-AbrB domains are found at residues 5–47 (EYDH…TLDE) and 76–119 (AVEV…DRET).

The protein belongs to the MraZ family. In terms of assembly, forms oligomers.

Its subcellular location is the cytoplasm. The protein localises to the nucleoid. The polypeptide is Transcriptional regulator MraZ (Staphylococcus aureus (strain Mu3 / ATCC 700698)).